A 605-amino-acid polypeptide reads, in one-letter code: Elongation factor 4 (605 aa).

Residues 4–181 (NKIKTFSIIA…AIVEYVPSPL (178 aa)) enclose the tr-type G domain. GTP-binding positions include 16–21 (DHGKST) and 128–131 (NKVD).

Belongs to the TRAFAC class translation factor GTPase superfamily. Classic translation factor GTPase family. LepA subfamily.

The protein localises to the cell membrane. The enzyme catalyses GTP + H2O = GDP + phosphate + H(+). Its function is as follows. Required for accurate and efficient protein synthesis under certain stress conditions. May act as a fidelity factor of the translation reaction, by catalyzing a one-codon backward translocation of tRNAs on improperly translocated ribosomes. Back-translocation proceeds from a post-translocation (POST) complex to a pre-translocation (PRE) complex, thus giving elongation factor G a second chance to translocate the tRNAs correctly. Binds to ribosomes in a GTP-dependent manner. In Mycoplasmopsis synoviae (strain 53) (Mycoplasma synoviae), this protein is Elongation factor 4.